The primary structure comprises 216 residues: Adenylate kinase (216 aa).

10–15 (GAGKGT) is a binding site for ATP. The interval 30 to 59 (STGDIFRKNISENTPLGIEAKSYMDNGQLV) is NMP. AMP-binding positions include Thr-31, Arg-36, 57–59 (QLV), 85–88 (GFPR), and Gln-92. The LID stretch occupies residues 126 to 163 (GRRVCPSCGASYHIKFNPPTNDGKCDLCGSDVIQRKDD). Arg-127 provides a ligand contact to ATP. Residues Cys-130 and Cys-133 each contribute to the Zn(2+) site. Residue 136-137 (SY) participates in ATP binding. Cys-150 and Cys-153 together coordinate Zn(2+). AMP is bound by residues Arg-160 and Arg-171. Gln-199 contributes to the ATP binding site.

It belongs to the adenylate kinase family. In terms of assembly, monomer.

It is found in the cytoplasm. It carries out the reaction AMP + ATP = 2 ADP. It participates in purine metabolism; AMP biosynthesis via salvage pathway; AMP from ADP: step 1/1. Catalyzes the reversible transfer of the terminal phosphate group between ATP and AMP. Plays an important role in cellular energy homeostasis and in adenine nucleotide metabolism. This Clostridium perfringens (strain ATCC 13124 / DSM 756 / JCM 1290 / NCIMB 6125 / NCTC 8237 / Type A) protein is Adenylate kinase.